We begin with the raw amino-acid sequence, 275 residues long: Large ribosomal subunit protein uL2 (275 aa).

2 disordered regions span residues 34 to 59 (LEKK…GGHK) and 223 to 275 (VAMN…RNKK).

The protein belongs to the universal ribosomal protein uL2 family. Part of the 50S ribosomal subunit. Forms a bridge to the 30S subunit in the 70S ribosome.

Its function is as follows. One of the primary rRNA binding proteins. Required for association of the 30S and 50S subunits to form the 70S ribosome, for tRNA binding and peptide bond formation. It has been suggested to have peptidyltransferase activity; this is somewhat controversial. Makes several contacts with the 16S rRNA in the 70S ribosome. The polypeptide is Large ribosomal subunit protein uL2 (Teredinibacter turnerae (strain ATCC 39867 / T7901)).